The chain runs to 316 residues: Acetyl-coenzyme A carboxylase carboxyl transferase subunit alpha (316 aa).

Positions 39 to 293 (KLEEKNAQLT…KKHLQANLTN (255 aa)) constitute a CoA carboxyltransferase C-terminal domain.

Belongs to the AccA family. In terms of assembly, acetyl-CoA carboxylase is a heterohexamer composed of biotin carboxyl carrier protein (AccB), biotin carboxylase (AccC) and two subunits each of ACCase subunit alpha (AccA) and ACCase subunit beta (AccD).

Its subcellular location is the cytoplasm. It catalyses the reaction N(6)-carboxybiotinyl-L-lysyl-[protein] + acetyl-CoA = N(6)-biotinyl-L-lysyl-[protein] + malonyl-CoA. It functions in the pathway lipid metabolism; malonyl-CoA biosynthesis; malonyl-CoA from acetyl-CoA: step 1/1. Its function is as follows. Component of the acetyl coenzyme A carboxylase (ACC) complex. First, biotin carboxylase catalyzes the carboxylation of biotin on its carrier protein (BCCP) and then the CO(2) group is transferred by the carboxyltransferase to acetyl-CoA to form malonyl-CoA. In Coxiella burnetii (strain CbuK_Q154) (Coxiella burnetii (strain Q154)), this protein is Acetyl-coenzyme A carboxylase carboxyl transferase subunit alpha.